The sequence spans 310 residues: MNELPLHLLNMRSLTRDHIEKLIQRANYFLTQGMEKNSVFETLKGHVVVNLFFEPSTRTRNSFEIAAKRLGAMVLNPNLKISAISKGETLFDTIKTLEAMGVYFFIVRHSENETPEQIAKQLSSGVVINAGDGNHQHPSQALIDLMTIKQHKPHWNKLCVTIIGDIRHSRVANSLMDGLVTMGVPEIRLVGPSSLLPDKVGNDSIKKFTELKPSLLNSDVIVTLRLQKERHDNSVDIDAFRGSFRLTPEKLYSAKPDAIVMHPGPVNREVEINSDVADNQQSVILQQVRNGVAMRMAVLELFLLRDFRFF.

Residues arginine 58 and threonine 59 each contribute to the carbamoyl phosphate site. Lysine 86 is an L-aspartate binding site. Carbamoyl phosphate-binding residues include arginine 108, histidine 137, and glutamine 140. The L-aspartate site is built by arginine 170 and arginine 225. The carbamoyl phosphate site is built by glycine 264 and proline 265.

Belongs to the aspartate/ornithine carbamoyltransferase superfamily. ATCase family. Heterododecamer (2C3:3R2) of six catalytic PyrB chains organized as two trimers (C3), and six regulatory PyrI chains organized as three dimers (R2).

The enzyme catalyses carbamoyl phosphate + L-aspartate = N-carbamoyl-L-aspartate + phosphate + H(+). It participates in pyrimidine metabolism; UMP biosynthesis via de novo pathway; (S)-dihydroorotate from bicarbonate: step 2/3. Catalyzes the condensation of carbamoyl phosphate and aspartate to form carbamoyl aspartate and inorganic phosphate, the committed step in the de novo pyrimidine nucleotide biosynthesis pathway. This Coxiella burnetii (strain CbuK_Q154) (Coxiella burnetii (strain Q154)) protein is Aspartate carbamoyltransferase catalytic subunit.